Reading from the N-terminus, the 103-residue chain is ATP-dependent Clp protease adapter protein ClpS 1 (103 aa).

Belongs to the ClpS family. In terms of assembly, binds to the N-terminal domain of the chaperone ClpA.

In terms of biological role, involved in the modulation of the specificity of the ClpAP-mediated ATP-dependent protein degradation. The protein is ATP-dependent Clp protease adapter protein ClpS 1 of Rhodopseudomonas palustris (strain ATCC BAA-98 / CGA009).